Consider the following 353-residue polypeptide: Tetraacyldisaccharide 4'-kinase (353 aa).

Position 66-73 (66-73) interacts with ATP; the sequence is TVGGTGKT.

It belongs to the LpxK family.

The catalysed reaction is a lipid A disaccharide + ATP = a lipid IVA + ADP + H(+). It functions in the pathway glycolipid biosynthesis; lipid IV(A) biosynthesis; lipid IV(A) from (3R)-3-hydroxytetradecanoyl-[acyl-carrier-protein] and UDP-N-acetyl-alpha-D-glucosamine: step 6/6. Its function is as follows. Transfers the gamma-phosphate of ATP to the 4'-position of a tetraacyldisaccharide 1-phosphate intermediate (termed DS-1-P) to form tetraacyldisaccharide 1,4'-bis-phosphate (lipid IVA). The chain is Tetraacyldisaccharide 4'-kinase from Geobacter sulfurreducens (strain ATCC 51573 / DSM 12127 / PCA).